A 393-amino-acid polypeptide reads, in one-letter code: Probable protein phosphatase 2C 68 (393 aa).

The PPM-type phosphatase domain maps to aspartate 56–isoleucine 359. Residues aspartate 87, glycine 88, aspartate 291, and aspartate 350 each contribute to the Mn(2+) site.

This sequence belongs to the PP2C family. Mg(2+) is required as a cofactor. Mn(2+) serves as cofactor.

It catalyses the reaction O-phospho-L-seryl-[protein] + H2O = L-seryl-[protein] + phosphate. The enzyme catalyses O-phospho-L-threonyl-[protein] + H2O = L-threonyl-[protein] + phosphate. Its function is as follows. May dephosphorylate and repress plasma membrane H(+)-ATPases (PM H(+)-ATPases, e.g. AHA1 and AHA2), thus influencing negatively plant growth and fitness. The chain is Probable protein phosphatase 2C 68 from Arabidopsis thaliana (Mouse-ear cress).